The chain runs to 176 residues: ATP-dependent protease subunit HslV (176 aa).

Residue Thr-2 is part of the active site. Na(+) contacts are provided by Gly-157, Cys-160, and Thr-163.

This sequence belongs to the peptidase T1B family. HslV subfamily. In terms of assembly, a double ring-shaped homohexamer of HslV is capped on each side by a ring-shaped HslU homohexamer. The assembly of the HslU/HslV complex is dependent on binding of ATP.

Its subcellular location is the cytoplasm. The catalysed reaction is ATP-dependent cleavage of peptide bonds with broad specificity.. Allosterically activated by HslU binding. Its function is as follows. Protease subunit of a proteasome-like degradation complex believed to be a general protein degrading machinery. This Pectobacterium atrosepticum (strain SCRI 1043 / ATCC BAA-672) (Erwinia carotovora subsp. atroseptica) protein is ATP-dependent protease subunit HslV.